The primary structure comprises 733 residues: Microtubule-associated protein tau (733 aa).

Residues 1 to 16 (MADPRQEFDTMEDHAG) are compositionally biased toward basic and acidic residues. Residues 1–548 (MADPRQEFDT…PVPMPDLKNV (548 aa)) form a disordered region. A2 carries the N-acetylalanine modification. Y18 bears the Phosphotyrosine; by FYN mark. K33 participates in a covalent cross-link: Glycyl lysine isopeptide (Lys-Gly) (interchain with G-Cter in ubiquitin). S35 and S50 each carry phosphoserine. The segment covering 50–60 (SETSDAKSTPT) has biased composition (polar residues). Phosphothreonine occurs at positions 58, 60, and 100. An Omega-N-methylarginine modification is found at R115. A compositionally biased stretch (polar residues) spans 126–137 (SDWTRQQVSSMS). A compositionally biased stretch (basic and acidic residues) spans 157 to 172 (RPEDIEKSHPASELLR). The residue at position 188 (S188) is a Phosphoserine. Residues 189 to 202 (EEEVDEDLTVDESS) show a composition bias toward acidic residues. The span at 203-212 (QDSPPSQASL) shows a compositional bias: polar residues. 2 stretches are compositionally biased toward basic and acidic residues: residues 270–294 (EEGH…KEQD) and 354–366 (ASKD…EKKA). Residues 413–427 (KHVSSVTPRNGSPGT) show a composition bias toward polar residues. Residue T445 is modified to Phosphothreonine. R447 is subject to Omega-N-methylarginine. Phosphoserine is present on S451. An N6,N6-dimethyllysine; alternate modification is found at K455. N6-acetyllysine; alternate is present on K455. 3 positions are modified to phosphothreonine: T461, T467, and T468. Position 470 is a phosphoserine (S470). Position 473 is a phosphothreonine (T473). Residues S477, S483, and S487 each carry the phosphoserine modification. Positions 479–506 (EPPKSGERSGYSSPGSPGTPGSRSRTPS) are enriched in low complexity. Y489 carries the post-translational modification Phosphotyrosine. Phosphoserine occurs at positions 490, 491, and 494. Phosphothreonine is present on residues T497 and T504. Position 506 is a phosphoserine (S506). A Phosphothreonine modification is found at T509. N6-acetyllysine is present on K517. Position 523 is a phosphothreonine (T523). Residues S527, S529, and S531 each carry the phosphoserine modification. 4 Tau/MAP repeats span residues 536–566 (QTAP…GGGK), 567–597 (VQII…GGGS), 598–628 (VQIV…GGGQ), and 629–660 (VEVK…GGGN). Residue K546 forms a Glycyl lysine isopeptide (Lys-Gly) (interchain with G-Cter in ubiquitin) linkage. Position 551 is an N6-acetyllysine; alternate (K551). The residue at position 551 (K551) is an N6-methyllysine; alternate. K551 is covalently cross-linked (Glycyl lysine isopeptide (Lys-Gly) (interchain with G-Cter in ubiquitin); alternate). Residue S554 is modified to Phosphoserine; by MARK1, BRSK1, BRSK2 and PHK. Residue K559 forms a Glycyl lysine isopeptide (Lys-Gly) (interchain with G-Cter in ubiquitin) linkage. K573 bears the N6-acetyllysine; alternate mark. K573 participates in a covalent cross-link: Glycyl lysine isopeptide (Lys-Gly) (interchain with G-Cter in ubiquitin); alternate. 2 positions are modified to phosphoserine: S577 and S581. Position 582 is an N6-acetyllysine (K582). Cysteines 583 and 614 form a disulfide. At S585 the chain carries Phosphoserine. Residue K590 is modified to N6-acetyllysine; alternate. A Glycyl lysine isopeptide (Lys-Gly) (interchain with G-Cter in ubiquitin); alternate cross-link involves residue K590. S597 is subject to Phosphoserine. An N6,N6-dimethyllysine; alternate modification is found at K603. K603, K609, and K613 each carry N6-acetyllysine; alternate. Glycyl lysine isopeptide (Lys-Gly) (interchain with G-Cter in ubiquitin); alternate cross-links involve residues K603, K609, and K613. S616 carries the post-translational modification Phosphoserine. K623, K635, and K639 each carry N6-acetyllysine; alternate. Glycyl lysine isopeptide (Lys-Gly) (interchain with G-Cter in ubiquitin); alternate cross-links involve residues K623, K635, and K639. The residue at position 641 (R641) is an Omega-N-methylarginine. Phosphoserine is present on S644. K645 is covalently cross-linked (Glycyl lysine isopeptide (Lys-Gly) (interchain with G-Cter in ubiquitin)). At S648 the chain carries Phosphoserine. K661 is subject to N6-acetyllysine; alternate. Residue K661 forms a Glycyl lysine isopeptide (Lys-Gly) (interchain with G-Cter in ubiquitin); alternate linkage. Residue K667 forms a Glycyl lysine isopeptide (Lys-Gly) (interchain with G-Cter in ubiquitin) linkage. K677 bears the N6-acetyllysine; alternate mark. A Glycyl lysine isopeptide (Lys-Gly) (interchain with G-Cter in ubiquitin); alternate cross-link involves residue K677. Position 686 is a phosphotyrosine (Y686). S688 is modified (phosphoserine). Residues 690-709 (VVSGDTSPRHLSNVSSTGSI) are disordered. S692 carries the phosphoserine; alternate modification. S692 carries O-linked (GlcNAc...) serine; alternate glycosylation. Over residues 693–708 (GDTSPRHLSNVSSTGS) the composition is skewed to polar residues. T695 is modified (phosphothreonine). Residues S696, S701, S708, and S714 each carry the phosphoserine modification. Residue T719 is modified to Phosphothreonine.

Interacts with MARK1, MARK2, MARK3 and MARK4. Interacts with SQSTM1 when polyubiquitinated. Interacts with PSMC2 through SQSTM1. Interacts with FKBP4. Binds to CSNK1D. Interacts with SGK1. Interacts with EPM2A; the interaction dephosphorylates MAPT at Ser-369. Interacts with PIN1. Interacts with LRRK2. Interacts with LRP1, leading to endocytosis; this interaction is reduced in the presence of LRPAP1/RAP. Post-translationally, polyubiquitinated. Requires functional TRAF6 and may provoke SQSTM1-dependent degradation by the proteasome. In terms of processing, phosphorylation at various serine and threonine residues in S-P or T-P motifs by proline-directed protein kinases (PDPK1, CDK1, CDK5, GSK3, MAPK) (a few sites per protein in interphase, more in mitosis), and at serine residues in K-X-G-S motifs by MAP/microtubule affinity-regulating kinase (MARK1, MARK2, MARK3, MARK4), causing detachment from microtubules, and their disassembly. Phosphorylated by PHK. Dephosphorylation at several serine and threonine residues by the serine/threonine phosphatase PPP5C. Phosphorylation at Ser-554 by BRSK1 and BRSK2 in neurons affects ability to bind microtubules and plays a role in neuron polarization. Phosphorylation at Ser-188 by SGK1 mediates microtubule depolymerization and neurite formation in hippocampal neurons. Expressed in neurons and at a lower level in the liver and kidney. Isoform PNS-tau is expressed in the peripheral nervous system while the others are expressed in the central nervous system.

It is found in the cytoplasm. Its subcellular location is the cytosol. It localises to the cell membrane. The protein resides in the cytoskeleton. The protein localises to the cell projection. It is found in the axon. Its subcellular location is the dendrite. It localises to the secreted. In terms of biological role, promotes microtubule assembly and stability, and might be involved in the establishment and maintenance of neuronal polarity. The C-terminus binds axonal microtubules while the N-terminus binds neural plasma membrane components, suggesting that tau functions as a linker protein between both. Axonal polarity is predetermined by tau localization (in the neuronal cell) in the domain of the cell body defined by the centrosome. The short isoforms allow plasticity of the cytoskeleton whereas the longer isoforms may preferentially play a role in its stabilization. This is Microtubule-associated protein tau from Mus musculus (Mouse).